Here is a 142-residue protein sequence, read N- to C-terminus: NADH-quinone oxidoreductase subunit A (142 aa).

The next 3 helical transmembrane spans lie at 8-28, 63-83, and 93-113; these read FGTV…GYLT, FYVV…LFPW, and FALI…VYAW.

Belongs to the complex I subunit 3 family. As to quaternary structure, NDH-1 is composed of 14 different subunits. Subunits NuoA, H, J, K, L, M, N constitute the membrane sector of the complex.

The protein resides in the cell inner membrane. The enzyme catalyses a quinone + NADH + 5 H(+)(in) = a quinol + NAD(+) + 4 H(+)(out). Its function is as follows. NDH-1 shuttles electrons from NADH, via FMN and iron-sulfur (Fe-S) centers, to quinones in the respiratory chain. The immediate electron acceptor for the enzyme in this species is believed to be a menaquinone. Couples the redox reaction to proton translocation (for every two electrons transferred, four hydrogen ions are translocated across the cytoplasmic membrane), and thus conserves the redox energy in a proton gradient. The polypeptide is NADH-quinone oxidoreductase subunit A (Chlorobium phaeobacteroides (strain BS1)).